Consider the following 92-residue polypeptide: Probable Fe(2+)-trafficking protein (92 aa).

Belongs to the Fe(2+)-trafficking protein family.

Functionally, could be a mediator in iron transactions between iron acquisition and iron-requiring processes, such as synthesis and/or repair of Fe-S clusters in biosynthetic enzymes. This is Probable Fe(2+)-trafficking protein from Shewanella frigidimarina (strain NCIMB 400).